The chain runs to 220 residues: MGAAARSLRLALGLLLLATLPRPADACSCSPVHPQQAFCNADVVIRAKAVSVKEVDSGNDIYGNPIKRIQYEIKQIKMFKGPDKDIEFIYTAPSSAVCGVSLDIGGKKEYLIAGKAEGNGKMHITLCDFIVPWDTLSSTQKKSLNHRYQMGCECKITRCPMIPCYISSPDECLWMDWVTEKSINGHQAKFFACIKRSDGSCAWYRGAAPPKQEFLDIEDP.

The first 26 residues, 1 to 26, serve as a signal peptide directing secretion; that stretch reads MGAAARSLRLALGLLLLATLPRPADA. Cys27 contacts Zn(2+). Involved in metalloproteinase-binding stretches follow at residues 27-30 and 95-96; these read CSCS and SA. 6 disulfide bridges follow: Cys27–Cys98, Cys29–Cys127, Cys39–Cys152, Cys154–Cys201, Cys159–Cys164, and Cys172–Cys193. Positions 27–152 constitute an NTR domain; the sequence is CSCSPVHPQQ…SLNHRYQMGC (126 aa).

This sequence belongs to the protease inhibitor I35 (TIMP) family. In terms of assembly, interacts (via the C-terminal) with MMP2 (via the C-terminal PEX domain); the interaction inhibits the MMP2 activity. In terms of processing, the activity of TIMP2 is dependent on the presence of disulfide bonds.

It localises to the secreted. Complexes with metalloproteinases (such as collagenases) and irreversibly inactivates them by binding to their catalytic zinc cofactor. This is Metalloproteinase inhibitor 2 (TIMP2) from Canis lupus familiaris (Dog).